The chain runs to 204 residues: Imidazoleglycerol-phosphate dehydratase (204 aa).

This sequence belongs to the imidazoleglycerol-phosphate dehydratase family.

The protein resides in the cytoplasm. The catalysed reaction is D-erythro-1-(imidazol-4-yl)glycerol 3-phosphate = 3-(imidazol-4-yl)-2-oxopropyl phosphate + H2O. Its pathway is amino-acid biosynthesis; L-histidine biosynthesis; L-histidine from 5-phospho-alpha-D-ribose 1-diphosphate: step 6/9. The chain is Imidazoleglycerol-phosphate dehydratase from Albidiferax ferrireducens (strain ATCC BAA-621 / DSM 15236 / T118) (Rhodoferax ferrireducens).